Here is a 419-residue protein sequence, read N- to C-terminus: Glucose-1-phosphate adenylyltransferase (419 aa).

Residues Tyr106, Gly171, 186–187 (EK), and Ser204 contribute to the alpha-D-glucose 1-phosphate site.

Belongs to the bacterial/plant glucose-1-phosphate adenylyltransferase family. Homotetramer.

It carries out the reaction alpha-D-glucose 1-phosphate + ATP + H(+) = ADP-alpha-D-glucose + diphosphate. It functions in the pathway glycan biosynthesis; glycogen biosynthesis. Functionally, involved in the biosynthesis of ADP-glucose, a building block required for the elongation reactions to produce glycogen. Catalyzes the reaction between ATP and alpha-D-glucose 1-phosphate (G1P) to produce pyrophosphate and ADP-Glc. The protein is Glucose-1-phosphate adenylyltransferase of Roseobacter denitrificans (strain ATCC 33942 / OCh 114) (Erythrobacter sp. (strain OCh 114)).